The sequence spans 82 residues: Small ribosomal subunit protein bS16 (82 aa).

This sequence belongs to the bacterial ribosomal protein bS16 family.

This is Small ribosomal subunit protein bS16 from Vibrio parahaemolyticus serotype O3:K6 (strain RIMD 2210633).